The chain runs to 238 residues: Ribonuclease PH (238 aa).

Phosphate is bound by residues Arg86 and 124–126 (GTR).

This sequence belongs to the RNase PH family. As to quaternary structure, homohexameric ring arranged as a trimer of dimers.

It carries out the reaction tRNA(n+1) + phosphate = tRNA(n) + a ribonucleoside 5'-diphosphate. In terms of biological role, phosphorolytic 3'-5' exoribonuclease that plays an important role in tRNA 3'-end maturation. Removes nucleotide residues following the 3'-CCA terminus of tRNAs; can also add nucleotides to the ends of RNA molecules by using nucleoside diphosphates as substrates, but this may not be physiologically important. Probably plays a role in initiation of 16S rRNA degradation (leading to ribosome degradation) during starvation. This chain is Ribonuclease PH, found in Pectobacterium atrosepticum (strain SCRI 1043 / ATCC BAA-672) (Erwinia carotovora subsp. atroseptica).